We begin with the raw amino-acid sequence, 215 residues long: Protein NETWORKED 3B (215 aa).

The region spanning 5–90 is the NAB domain; the sequence is SKWWWIGANH…QKHDLLIKTS (86 aa). Positions 134–165 form a coiled coil; it reads DETMKEELEILREENRVYKEKKEVVTRLLANL.

It belongs to the NET family. As to quaternary structure, interacts with F-actin.

Its function is as follows. Plant-specific actin binding protein. May be part of a membrane-cytoskeletal adapter complex. The sequence is that of Protein NETWORKED 3B from Arabidopsis thaliana (Mouse-ear cress).